Reading from the N-terminus, the 210-residue chain is Probable nicotinate-nucleotide adenylyltransferase (210 aa).

It belongs to the NadD family.

The catalysed reaction is nicotinate beta-D-ribonucleotide + ATP + H(+) = deamido-NAD(+) + diphosphate. It functions in the pathway cofactor biosynthesis; NAD(+) biosynthesis; deamido-NAD(+) from nicotinate D-ribonucleotide: step 1/1. Catalyzes the reversible adenylation of nicotinate mononucleotide (NaMN) to nicotinic acid adenine dinucleotide (NaAD). The chain is Probable nicotinate-nucleotide adenylyltransferase from Streptococcus pyogenes serotype M3 (strain ATCC BAA-595 / MGAS315).